The following is a 308-amino-acid chain: Phenylcoumaran benzylic ether reductase TP7 (308 aa).

Residues 11 to 17 (GGTGYIG), Arg-36, and Lys-45 each bind NADP(+). The active-site Proton acceptor is the Lys-133. Position 137 (Arg-137) interacts with NADP(+).

This sequence belongs to the NmrA-type oxidoreductase family. Isoflavone reductase subfamily. In terms of tissue distribution, expressed in flowers. Expressed at low levels in stems.

It catalyses the reaction (-)-dehydrodiconiferyl alcohol + NADPH + H(+) = (S)-isodihydrodehydrodiconiferyl alcohol + NADP(+). The catalysed reaction is (+)-dehydrodiconiferyl alcohol + NADPH + H(+) = (R)-isodihydrodehydrodiconiferyl alcohol + NADP(+). It carries out the reaction (2R,3S)-dihydrodehydrodiconiferyl alcohol + NADPH + H(+) = (S)-tetrahydrodehydrodiconiferyl alcohol + NADP(+). The enzyme catalyses (2S,3R)-dihydrodehydrodiconiferyl alcohol + NADPH + H(+) = (R)-tetrahydrodehydrodiconiferyl alcohol + NADP(+). Functionally, oxidoreductase involved in lignan biosynthesis. Catalyzes the NADPH-dependent reduction of phenylcoumaran benzylic ethers. Converts dehydrodiconiferyl alcohol (DDC) to isodihydrodehydrodiconiferyl alcohol (IDDDC), and dihydrodehydrodiconiferyl alcohol (DDDC) to tetrahydrodehydrodiconiferyl alcohol (TDDC). The sequence is that of Phenylcoumaran benzylic ether reductase TP7 from Nicotiana tabacum (Common tobacco).